Consider the following 367-residue polypeptide: Glutamate 5-kinase (367 aa).

An ATP-binding site is contributed by lysine 10. Positions 50, 137, and 149 each coordinate substrate. ATP contacts are provided by residues 169 to 170 (TD) and 211 to 217 (TGGMGTK). The region spanning 275-353 (AGEITVDAGA…QQIDAILGYE (79 aa)) is the PUA domain.

This sequence belongs to the glutamate 5-kinase family.

The protein resides in the cytoplasm. It carries out the reaction L-glutamate + ATP = L-glutamyl 5-phosphate + ADP. The protein operates within amino-acid biosynthesis; L-proline biosynthesis; L-glutamate 5-semialdehyde from L-glutamate: step 1/2. In terms of biological role, catalyzes the transfer of a phosphate group to glutamate to form L-glutamate 5-phosphate. The sequence is that of Glutamate 5-kinase from Klebsiella pneumoniae subsp. pneumoniae (strain ATCC 700721 / MGH 78578).